Consider the following 72-residue polypeptide: Hypotensin (72 aa).

The N-terminal stretch at 1-24 (MKMMIAVFVSILLLMFSLSSTAMG) is a signal peptide. Propeptides lie at residues 25 to 35 (METEQQNMEER) and 61 to 72 (RFDPATFGENED).

It belongs to the non-disulfide-bridged peptide (NDBP) superfamily. Expressed by the venom gland.

The protein resides in the secreted. Potentiates the hypotensive action of bradykinin (BK) in normotensive rats, and induces a vasorelaxant effect in mesenteric artery rings that is induced by endothelium-dependent release of nitric oxide (NO). Does not inhibit angiotensin converting enzyme (ACE). Shows neither hemolytic activity nor cytotoxicity to normal and cancer cells. Shows moderate antimicrobial activity against the fungi Candida albicans and the filamentous fungus Trichophyton rubrum, as well as against the bacteria C.albicans (MIC=128 ug/mL), C.tropicalis (MIC=128 ug/mL) and Aspergillus flavus (MIC=128 ug/mL). Has no antimicrobial activity against S.aureus, S.epidermidis and P.aeruginosa. The protein is Hypotensin of Tityus stigmurus (Brazilian scorpion).